The chain runs to 261 residues: X-box-binding protein 1 (261 aa).

Over 1–185 (MVVVAPAQSP…VQAQLSPLQN (185 aa)) the chain is Cytoplasmic. Low complexity predominate over residues 27–37 (TGGAPAGRALP). The disordered stretch occupies residues 27–65 (TGGAPAGRALPVMVPGQQGASPEGASGVPPQARKRQRLT). Residues Ser47 and Ser68 each carry the phosphoserine modification. Residues 70-133 (EEKALRRKLK…HGLVVENQEL (64 aa)) form the bZIP domain. The segment at 72–94 (KALRRKLKNRVAAQTARDRKKAR) is basic motif. A nuclear localization signal (NLS) region spans residues 76 to 92 (RKLKNRVAAQTARDRKK). The tract at residues 98–133 (LEQQVVDLEEENQKLLLENQLLREKTHGLVVENQEL) is leucine-zipper. A helical; Signal-anchor for type II membrane protein membrane pass occupies residues 186–203 (ISPWTLMALTLQTLSLTS). Residues 204–261 (CWAFCSTWTQSCSSDVLPQSLPAWSSSQKWTQKDPVPYRPPLLHPWGRHQPSWKPLMN) lie on the Lumenal side of the membrane.

Belongs to the bZIP family. Isoform 1 interacts with HM13. Isoform 1 interacts with RNF139; the interaction induces ubiquitination and degradation of isoform 1. Isoform 1 interacts (via luminal domain) with DERL1; the interaction obviates the need for ectodomain shedding prior HM13/SPP-mediated XBP1 isoform 1 cleavage. Isoform 1 interacts with HDAC3 and AKT1; the interactions occur in endothelial cell (EC) under disturbed flow. Isoform 1 interacts with the oncoprotein FOS. Interacts with SIRT1. Post-translationally, isoform 1 is ubiquitinated, leading to proteasome-mediated degradation in response to ER stress. X-box-binding protein 1, cytoplasmic form and luminal form are produced by intramembrane proteolytic cleavage of ER membrane-anchored isoform 1 triggered by HM13/SPP in a DERL1-RNF139-dependent and VCP/p97-independent manner. X-box-binding protein 1, luminal form is ubiquitinated leading to proteasomal degradation. In terms of processing, acetylated by EP300; acetylation positively regulates the transcriptional activity of XBP1. Deacetylated by SIRT1; deacetylation negatively regulates the transcriptional activity of XBP1.

It is found in the nucleus. The protein localises to the endoplasmic reticulum. The protein resides in the cytoplasm. Its subcellular location is the endoplasmic reticulum membrane. It localises to the membrane. Functionally, functions as a transcription factor during endoplasmic reticulum (ER) stress by regulating the unfolded protein response (UPR). Required for cardiac myogenesis and hepatogenesis during embryonic development, and the development of secretory tissues such as exocrine pancreas and salivary gland. Involved in terminal differentiation of B lymphocytes to plasma cells and production of immunoglobulins. Modulates the cellular response to ER stress in a PIK3R-dependent manner. Binds to the cis-acting X box present in the promoter regions of major histocompatibility complex class II genes. Involved in VEGF-induced endothelial cell (EC) proliferation and retinal blood vessel formation during embryonic development but also for angiogenesis in adult tissues under ischemic conditions. Functions also as a major regulator of the UPR in obesity-induced insulin resistance and type 2 diabetes for the management of obesity and diabetes prevention. Acts as a weak transcriptional factor. Together with HDAC3, contributes to the activation of NFE2L2-mediated HMOX1 transcription factor gene expression in a PI(3)K/mTORC2/Akt-dependent signaling pathway leading to EC survival under disturbed flow/oxidative stress. Binds to the ER stress response element (ERSE) upon ER stress. Binds to the consensus 5'-GATGACGTG[TG]N(3)[AT]T-3' sequence related to cAMP responsive element (CRE)-like sequences. Associates preferentially to the HDAC3 gene promoter region in a static flow-dependent manner. Binds to the CDH5/VE-cadherin gene promoter region. The sequence is that of X-box-binding protein 1 from Bos taurus (Bovine).